Reading from the N-terminus, the 253-residue chain is Ditrans,polycis-undecaprenyl-diphosphate synthase ((2E,6E)-farnesyl-diphosphate specific) (253 aa).

Asp26 is a catalytic residue. Asp26 is a Mg(2+) binding site. Substrate contacts are provided by residues 27–30, Trp31, Arg39, His43, and 71–73; these read GNGR and SSE. The active-site Proton acceptor is the Asn74. 3 residues coordinate substrate: Trp75, Arg77, and Arg194. His199 is a binding site for Mg(2+). 200–202 provides a ligand contact to substrate; that stretch reads RIS. Glu213 is a binding site for Mg(2+).

The protein belongs to the UPP synthase family. In terms of assembly, homodimer. Requires Mg(2+) as cofactor.

The enzyme catalyses 8 isopentenyl diphosphate + (2E,6E)-farnesyl diphosphate = di-trans,octa-cis-undecaprenyl diphosphate + 8 diphosphate. Catalyzes the sequential condensation of isopentenyl diphosphate (IPP) with (2E,6E)-farnesyl diphosphate (E,E-FPP) to yield (2Z,6Z,10Z,14Z,18Z,22Z,26Z,30Z,34E,38E)-undecaprenyl diphosphate (di-trans,octa-cis-UPP). UPP is the precursor of glycosyl carrier lipid in the biosynthesis of bacterial cell wall polysaccharide components such as peptidoglycan and lipopolysaccharide. This Shigella flexneri protein is Ditrans,polycis-undecaprenyl-diphosphate synthase ((2E,6E)-farnesyl-diphosphate specific).